A 194-amino-acid polypeptide reads, in one-letter code: Ras-like protein rasS (194 aa).

10 to 17 (GPGGVGKS) provides a ligand contact to GTP. An Effector region motif is present at residues 32–40 (YDPTLEDSY). GTP contacts are provided by residues 57 to 61 (DTAGQ) and 116 to 119 (NKCD). Positions 168 to 194 (RQSNQHSNSQEQNTDQPIKKKKSCNLL) are disordered. Positions 169-180 (QSNQHSNSQEQN) are enriched in low complexity. C191 carries the post-translational modification Cysteine methyl ester. C191 carries S-geranylgeranyl cysteine lipidation. Positions 192 to 194 (NLL) are cleaved as a propeptide — removed in mature form.

It belongs to the small GTPase superfamily. Ras family.

The protein localises to the cell membrane. It carries out the reaction GTP + H2O = GDP + phosphate + H(+). Ras proteins bind GDP/GTP and possess intrinsic GTPase activity. The polypeptide is Ras-like protein rasS (rasS) (Dictyostelium discoideum (Social amoeba)).